The following is a 290-amino-acid chain: Dual-specificity RNA pseudouridine synthase RluF (290 aa).

Positions 7 to 72 (VRLNKYISES…EAEDLVLIAL (66 aa)) constitute an S4 RNA-binding domain. Interaction with RNA stretches follow at residues 105 to 108 (RLDK) and 187 to 190 (RQIR). D107 (nucleophile) is an active-site residue. Residues 243–290 (VKPKAKAKPKTAGIKRPVVKMEKTAEKGGRPASNGKRFTSPGRKKKGR) are disordered. Residues 261–271 (VKMEKTAEKGG) show a composition bias toward basic and acidic residues.

Belongs to the pseudouridine synthase RsuA family. In terms of assembly, monomer.

It catalyses the reaction uridine(2604) in 23S rRNA = pseudouridine(2604) in 23S rRNA. The enzyme catalyses uridine(35) in tRNA(Tyr) = pseudouridine(35) in tRNA(Tyr). In terms of biological role, dual specificity enzyme that catalyzes the synthesis of pseudouridine from uracil-2604 in 23S ribosomal RNA and from uracil-35 in the anticodon of tRNA(Tyr). Can, to a small extent, also react with uracil-2605. The polypeptide is Dual-specificity RNA pseudouridine synthase RluF (rluF) (Escherichia coli (strain K12)).